Here is a 598-residue protein sequence, read N- to C-terminus: NADH-quinone oxidoreductase subunit C/D (598 aa).

An NADH dehydrogenase I subunit C region spans residues 1 to 189 (MTDLTTSDSL…DPYVLTKQKE (189 aa)). Positions 213-598 (DFMFLNLGPN…IDFVMSDVDR (386 aa)) are NADH dehydrogenase I subunit D.

It in the N-terminal section; belongs to the complex I 30 kDa subunit family. This sequence in the C-terminal section; belongs to the complex I 49 kDa subunit family. NDH-1 is composed of 13 different subunits. Subunits NuoB, CD, E, F, and G constitute the peripheral sector of the complex.

Its subcellular location is the cell inner membrane. It carries out the reaction a quinone + NADH + 5 H(+)(in) = a quinol + NAD(+) + 4 H(+)(out). NDH-1 shuttles electrons from NADH, via FMN and iron-sulfur (Fe-S) centers, to quinones in the respiratory chain. The immediate electron acceptor for the enzyme in this species is believed to be ubiquinone. Couples the redox reaction to proton translocation (for every two electrons transferred, four hydrogen ions are translocated across the cytoplasmic membrane), and thus conserves the redox energy in a proton gradient. The polypeptide is NADH-quinone oxidoreductase subunit C/D (Yersinia pestis bv. Antiqua (strain Angola)).